Here is a 353-residue protein sequence, read N- to C-terminus: UPF0283 membrane protein KPK_3110 (353 aa).

The next 3 helical transmembrane spans lie at 70–90 (MVSA…VQWT), 99–119 (WIAL…VGSV), and 213–233 (ESTL…FIAW).

It belongs to the UPF0283 family.

Its subcellular location is the cell inner membrane. This chain is UPF0283 membrane protein KPK_3110, found in Klebsiella pneumoniae (strain 342).